Here is a 338-residue protein sequence, read N- to C-terminus: Glycerol-3-phosphate dehydrogenase [NAD(P)+] (338 aa).

Residues Ser-12, Trp-13, and Lys-110 each contribute to the NADPH site. Sn-glycerol 3-phosphate-binding residues include Lys-110, Gly-141, and Ser-143. Position 145 (Ala-145) interacts with NADPH. Sn-glycerol 3-phosphate-binding residues include Lys-196, Asp-249, Ser-259, Arg-260, and Asn-261. The active-site Proton acceptor is the Lys-196. Arg-260 is an NADPH binding site. NADPH-binding residues include Val-284 and Glu-286.

This sequence belongs to the NAD-dependent glycerol-3-phosphate dehydrogenase family.

The protein localises to the cytoplasm. The enzyme catalyses sn-glycerol 3-phosphate + NAD(+) = dihydroxyacetone phosphate + NADH + H(+). The catalysed reaction is sn-glycerol 3-phosphate + NADP(+) = dihydroxyacetone phosphate + NADPH + H(+). The protein operates within membrane lipid metabolism; glycerophospholipid metabolism. In terms of biological role, catalyzes the reduction of the glycolytic intermediate dihydroxyacetone phosphate (DHAP) to sn-glycerol 3-phosphate (G3P), the key precursor for phospholipid synthesis. This Pediococcus pentosaceus (strain ATCC 25745 / CCUG 21536 / LMG 10740 / 183-1w) protein is Glycerol-3-phosphate dehydrogenase [NAD(P)+].